Consider the following 364-residue polypeptide: MMDPAATSFWATPVGWTLVTAGQILAVMIWILLSLAFLLLADRKIWAGVQMRKGPNVVGPFGLLQSFADFLKFVLKEIVIPSGADKTVFLLAPLISFTLAFAAWAVIPLAPGWVVSDINVGILYLFAISSLGVYGIIMGGWASNSKYPFLGSLRSAAQMVSYEVSIGFIIITVILLAGSMNLQQIVASQTGGFWNWYVFGGPGGLAKLPLLLVMVPMAVIFFISGLAETNRPPFDLPEAESELVAGYQVEYSSTPYLLFMIGEYANIVLICAMTTILFFGGWSAPFPSDFTDSWAPTAASFYYFMWFFLKVIFFFFLVSMAKAIVPRYRYDQLMRLGWKVFLPFSLVCVALIAAWRVFGPAAAA.

The next 8 membrane-spanning stretches (helical) occupy residues 21–41 (AGQILAVMIWILLSLAFLLLA), 88–108 (VFLLAPLISFTLAFAAWAVIP), 120–140 (VGILYLFAISSLGVYGIIMGG), 159–179 (MVSYEVSIGFIIITVILLAGS), 208–228 (LPLLLVMVPMAVIFFISGLAE), 267–287 (IVLICAMTTILFFGGWSAPFP), 301–321 (FYYFMWFFLKVIFFFFLVSMA), and 340–360 (VFLPFSLVCVALIAAWRVFGP).

This sequence belongs to the complex I subunit 1 family. As to quaternary structure, NDH-1 is composed of 14 different subunits. Subunits NuoA, H, J, K, L, M, N constitute the membrane sector of the complex.

The protein resides in the cell inner membrane. It carries out the reaction a quinone + NADH + 5 H(+)(in) = a quinol + NAD(+) + 4 H(+)(out). Its function is as follows. NDH-1 shuttles electrons from NADH, via FMN and iron-sulfur (Fe-S) centers, to quinones in the respiratory chain. The immediate electron acceptor for the enzyme in this species is believed to be ubiquinone. Couples the redox reaction to proton translocation (for every two electrons transferred, four hydrogen ions are translocated across the cytoplasmic membrane), and thus conserves the redox energy in a proton gradient. This subunit may bind ubiquinone. In Phenylobacterium zucineum (strain HLK1), this protein is NADH-quinone oxidoreductase subunit H.